Reading from the N-terminus, the 307-residue chain is Undecaprenyl-diphosphatase (307 aa).

6 consecutive transmembrane segments (helical) span residues 40 to 60 (AAKT…VVYF), 79 to 99 (LRLA…GLLF), 107 to 127 (LFGP…MIGV), 183 to 203 (AAAA…ATVF), 219 to 239 (IVAL…VIAV), and 249 to 269 (LAPF…LWIA).

It belongs to the UppP family.

It is found in the cell inner membrane. It carries out the reaction di-trans,octa-cis-undecaprenyl diphosphate + H2O = di-trans,octa-cis-undecaprenyl phosphate + phosphate + H(+). Functionally, catalyzes the dephosphorylation of undecaprenyl diphosphate (UPP). Confers resistance to bacitracin. This Sorangium cellulosum (strain So ce56) (Polyangium cellulosum (strain So ce56)) protein is Undecaprenyl-diphosphatase.